A 310-amino-acid chain; its full sequence is Methionyl-tRNA formyltransferase (310 aa).

106–109 provides a ligand contact to (6S)-5,6,7,8-tetrahydrofolate; that stretch reads SLLP.

The protein belongs to the Fmt family.

The enzyme catalyses L-methionyl-tRNA(fMet) + (6R)-10-formyltetrahydrofolate = N-formyl-L-methionyl-tRNA(fMet) + (6S)-5,6,7,8-tetrahydrofolate + H(+). Functionally, attaches a formyl group to the free amino group of methionyl-tRNA(fMet). The formyl group appears to play a dual role in the initiator identity of N-formylmethionyl-tRNA by promoting its recognition by IF2 and preventing the misappropriation of this tRNA by the elongation apparatus. The protein is Methionyl-tRNA formyltransferase of Fervidobacterium nodosum (strain ATCC 35602 / DSM 5306 / Rt17-B1).